Here is a 481-residue protein sequence, read N- to C-terminus: UDP-glucose 6-dehydrogenase 1 (481 aa).

NAD(+)-binding positions include 8–13 (GAGYVG), Asp-33, Arg-38, 86–90 (VNTPT), 127–128 (ST), and Glu-162. Substrate contacts are provided by residues 158–162 (EFLAE), 217–224 (KLAANAFL), and 257–270 (RIGAKFLNASVGFG). The active-site Nucleophile is the Cys-273. 273–276 (CFQK) lines the NAD(+) pocket. 335–336 (FK) provides a ligand contact to substrate. Arg-343 provides a ligand contact to NAD(+). Ser-394 carries the post-translational modification Phosphoserine. Position 448 (Arg-448) interacts with substrate.

Belongs to the UDP-glucose/GDP-mannose dehydrogenase family.

The catalysed reaction is UDP-alpha-D-glucose + 2 NAD(+) + H2O = UDP-alpha-D-glucuronate + 2 NADH + 3 H(+). It participates in nucleotide-sugar biosynthesis; UDP-alpha-D-glucuronate biosynthesis; UDP-alpha-D-glucuronate from UDP-alpha-D-glucose: step 1/1. Involved in the biosynthesis of UDP-glucuronic acid (UDP-GlcA), providing nucleotide sugars for cell-wall polymers. The polypeptide is UDP-glucose 6-dehydrogenase 1 (UGD1) (Oryza sativa subsp. japonica (Rice)).